We begin with the raw amino-acid sequence, 245 residues long: 1-(5-phosphoribosyl)-5-[(5-phosphoribosylamino)methylideneamino] imidazole-4-carboxamide isomerase (245 aa).

Residue D8 is the Proton acceptor of the active site. D129 acts as the Proton donor in catalysis.

Belongs to the HisA/HisF family.

The protein localises to the cytoplasm. It catalyses the reaction 1-(5-phospho-beta-D-ribosyl)-5-[(5-phospho-beta-D-ribosylamino)methylideneamino]imidazole-4-carboxamide = 5-[(5-phospho-1-deoxy-D-ribulos-1-ylimino)methylamino]-1-(5-phospho-beta-D-ribosyl)imidazole-4-carboxamide. Its pathway is amino-acid biosynthesis; L-histidine biosynthesis; L-histidine from 5-phospho-alpha-D-ribose 1-diphosphate: step 4/9. The chain is 1-(5-phosphoribosyl)-5-[(5-phosphoribosylamino)methylideneamino] imidazole-4-carboxamide isomerase from Rhodopseudomonas palustris (strain BisB18).